Consider the following 200-residue polypeptide: Pyridoxal 5'-phosphate synthase subunit PdxT (200 aa).

52 to 54 is an L-glutamine binding site; sequence GES. Cys-84 (nucleophile) is an active-site residue. L-glutamine is bound by residues Arg-116 and 145 to 146; that span reads IR. Residues His-181 and Glu-183 each act as charge relay system in the active site.

Belongs to the glutaminase PdxT/SNO family. As to quaternary structure, in the presence of PdxS, forms a dodecamer of heterodimers. Only shows activity in the heterodimer.

It catalyses the reaction aldehydo-D-ribose 5-phosphate + D-glyceraldehyde 3-phosphate + L-glutamine = pyridoxal 5'-phosphate + L-glutamate + phosphate + 3 H2O + H(+). The catalysed reaction is L-glutamine + H2O = L-glutamate + NH4(+). It participates in cofactor biosynthesis; pyridoxal 5'-phosphate biosynthesis. In terms of biological role, catalyzes the hydrolysis of glutamine to glutamate and ammonia as part of the biosynthesis of pyridoxal 5'-phosphate. The resulting ammonia molecule is channeled to the active site of PdxS. This chain is Pyridoxal 5'-phosphate synthase subunit PdxT, found in Saccharolobus islandicus (strain Y.G.57.14 / Yellowstone #1) (Sulfolobus islandicus).